A 380-amino-acid polypeptide reads, in one-letter code: Alcohol dehydrogenase 2 (380 aa).

Zn(2+)-binding residues include Cys-48, Thr-50, His-70, Cys-100, Cys-103, Cys-106, Cys-114, and Cys-178. 2 residues coordinate an alcohol: Thr-50 and His-70. Thr-50 is an NAD(+) binding site. NAD(+) is bound by residues 203–208 (GLGAVG), Asp-227, Arg-232, Thr-273, Val-296, 296–298 (VGV), Phe-323, and Arg-373.

The protein belongs to the zinc-containing alcohol dehydrogenase family. Homodimer. Homotetramer. It depends on Zn(2+) as a cofactor.

Its subcellular location is the cytoplasm. It carries out the reaction a primary alcohol + NAD(+) = an aldehyde + NADH + H(+). The catalysed reaction is a secondary alcohol + NAD(+) = a ketone + NADH + H(+). The polypeptide is Alcohol dehydrogenase 2 (ADH2) (Solanum lycopersicum (Tomato)).